A 284-amino-acid polypeptide reads, in one-letter code: 2-dehydro-3-deoxyphosphooctonate aldolase (284 aa).

Belongs to the KdsA family.

It localises to the cytoplasm. The catalysed reaction is D-arabinose 5-phosphate + phosphoenolpyruvate + H2O = 3-deoxy-alpha-D-manno-2-octulosonate-8-phosphate + phosphate. It participates in carbohydrate biosynthesis; 3-deoxy-D-manno-octulosonate biosynthesis; 3-deoxy-D-manno-octulosonate from D-ribulose 5-phosphate: step 2/3. The protein operates within bacterial outer membrane biogenesis; lipopolysaccharide biosynthesis. The chain is 2-dehydro-3-deoxyphosphooctonate aldolase from Citrobacter koseri (strain ATCC BAA-895 / CDC 4225-83 / SGSC4696).